A 456-amino-acid chain; its full sequence is Exodeoxyribonuclease 7 large subunit (456 aa).

It belongs to the XseA family. Heterooligomer composed of large and small subunits.

Its subcellular location is the cytoplasm. It catalyses the reaction Exonucleolytic cleavage in either 5'- to 3'- or 3'- to 5'-direction to yield nucleoside 5'-phosphates.. Bidirectionally degrades single-stranded DNA into large acid-insoluble oligonucleotides, which are then degraded further into small acid-soluble oligonucleotides. In Escherichia coli (strain SE11), this protein is Exodeoxyribonuclease 7 large subunit.